A 550-amino-acid polypeptide reads, in one-letter code: ATP-dependent RNA helicase dbp2 (550 aa).

The disordered stretch occupies residues 1–25 (MSYRDNEYSGNYNGKEDGYNSRGRY). Positions 122–150 (TTFEEAGFPNYVLKEVKQLGFEAPTPIQQ) match the Q motif motif. One can recognise a Helicase ATP-binding domain in the interval 153–328 (WPMAMSGRDM…RDYLNDYIQV (176 aa)). 166-173 (SATGSGKT) is a binding site for ATP. The short motif at 276–279 (DEAD) is the DEAD box element. Positions 340–503 (NIKQIVEVVD…DIDPKLEEMA (164 aa)) constitute a Helicase C-terminal domain. The interval 510–533 (RGGNYRRGGYGRGGFRRGGGYGNR) is RNA-binding RGG-box. The interval 525 to 550 (RRGGGYGNRNRGFTGSNSAPLARSRW) is disordered.

It belongs to the DEAD box helicase family. DDX5/DBP2 subfamily. As to quaternary structure, associates with polysomes.

The protein localises to the cytoplasm. It is found in the nucleus. The catalysed reaction is ATP + H2O = ADP + phosphate + H(+). Functionally, ATP-dependent RNA helicase involved nonsense-mediated mRNA decay and ribosome biogenesis through rRNA processing. In Schizosaccharomyces pombe (strain 972 / ATCC 24843) (Fission yeast), this protein is ATP-dependent RNA helicase dbp2 (dbp2).